The sequence spans 556 residues: Genetic interactor of prohibitins 3, mitochondrial (556 aa).

The N-terminal 21 residues, 1–21 (MLNLCHALRGVRQFSCSVIVK), are a transit peptide targeting the mitochondrion. A CP-type G domain is found at 113-305 (ESTLNDILNY…LFDLPGYSTS (193 aa)).

It belongs to the TRAFAC class YlqF/YawG GTPase family. GEP3 subfamily.

Its subcellular location is the mitochondrion. Its function is as follows. Interacts genetically with prohibitins and thus may be involved in the mitochondrial lipid metabolism. The chain is Genetic interactor of prohibitins 3, mitochondrial (GEP3) from Saccharomyces cerevisiae (strain ATCC 204508 / S288c) (Baker's yeast).